The chain runs to 523 residues: Ubiquilin (523 aa).

Residues 2-77 enclose the Ubiquitin-like domain; that stretch reads VKINIKSSTD…VHLVKGAAPP (76 aa). The segment at 70 to 99 is disordered; it reads LVKGAAPPPPPPVEQQVPTPSNTQPQGIPG. 2 STI1 domains span residues 100 to 135 and 139 to 178; these read VPQN…FRDM and NPEM…MREM. Residues 215–227 are compositionally biased toward low complexity; that stretch reads NQQAASQNQTNSN. Residues 215 to 325 are disordered; sequence NQQAASQNQT…ASMFGGGGGG (111 aa). Positions 228–241 are enriched in polar residues; it reads PIQTNTDANPNSQP. Residues 245–278 are compositionally biased toward low complexity; that stretch reads PWSTNSSSTSSNPTSSSPSSRPTTGSSTNTGASN. Positions 285 to 296 are enriched in gly residues; that stretch reads SGGGGGMGGGTN. Residues 297–310 are compositionally biased toward low complexity; it reads NTGTNNTGSTNNTG. STI1 domains are found at residues 339–380 and 383–415; these read DPER…RQMM and NPQL…QQAM. The 44-residue stretch at 480 to 523 folds into the UBA domain; the sequence is PPEQRFRLQLEQLEELGFVDRAANISALTSTNGNINLAIDRLLR.

Functionally, stable protein which acts as an antagonist of nosA by repressing cellular differentiation after the tight-aggregate stage, when cells differentiate into two precursor cell types, prespore and prestalk cells, prior to the formation of fruiting bodies. The polypeptide is Ubiquilin (ubqln) (Dictyostelium discoideum (Social amoeba)).